The chain runs to 841 residues: MPNQMRVLDFGDGSVPIQLDYPDSKIFSKCSSYGDRVPGTHWNEITVHHKGRLEYSPNPEQIILDALYQAIDGADFFPVFYQRGKNMDTMLVRNCKAAIDKLFKQRLSINLKGGASIPISIQLGVAQYQRHQITPTFHIARVVTRLMKQLIQRDGVDGLLNLDNFGSHPEFKNLVVSLGNPSILMNVCQVIHNDDNERFRLNGFILSNNRIRDIRPLTLLANVDYALLDLRGNKIKSAERLCRALEQFRARELLLENNPIVKISNFPANIKSLESNFELVDGKPFNMLHKIFSPLDVEIDLEVDGARIDTNNMWKLPEFENSQHWHAFMIPDPSHEFNQEVFFDFFFIRLDPTLSNFYPCYYKYINTEHVFLVRNCFDQIAHLVNNCNLEMTIPTGDRIFRYYLRMNVSTVKQHHVDPEECIQKAVSQCYVAQNRMLNLERFHSRECLKDVMVSLSSPKILTYVLSVASRKFMTTCSEIRLCHNKVLVLDGAHVLGMMGCLRAVDLSHNWVQDLSSIHSLGNLPLKSLVLHGNKLCRNYRLPSEYVRAVKEVFPQLTTLDGVDLQTNPGQSLQKNFLCDTGAYELVGAFLENYLREFENDEFRHNLYKYYSENSIFTLTCNYNVVQNHQTPKILQRLSKYNRHARNLRNKDYSKASDGVFFGCTYIVEILLQLPRVTHDFHSLQTDVMHYNGKGAVIYVAGLLRDEPPSTRNGHGSKTDIGGVLLGFSRQFVVTFDEANLGLGKRARRLKIANERLHITNPSKTAIRNAFSVNFPDPSERQAEEDSLDVKDHKLLLFQEVTGLISTWVTSIVEEADWDFERALKLFIQKNADHEIPDLAFA.

The RNA-binding unit probably involved in Piwi-dependent recruitment and single-stranded RNA-PPNP complex formation stretch occupies residues 1–285 (MPNQMRVLDF…NFELVDGKPF (285 aa)). LRR repeat units follow at residues 200–221 (RLNG…TLLA), 224–245 (DYAL…CRAL), and 249–270 (RARE…PANI). The interval 286–553 (NMLHKIFSPL…EYVRAVKEVF (268 aa)) is necessary for silencing function. One can recognise an RRM domain in the interval 325-408 (WHAFMIPDPS…IFRYYLRMNV (84 aa)). LRR repeat units follow at residues 475 to 496 (TCSE…HVLG), 500 to 521 (CLRA…HSLG), and 524 to 545 (PLKS…PSEY). The NTF2 domain maps to 585–758 (LVGAFLENYL…LKIANERLHI (174 aa)). The 54-residue stretch at 788–841 (DVKDHKLLLFQEVTGLISTWVTSIVEEADWDFERALKLFIQKNADHEIPDLAFA) folds into the TAP-C domain.

Belongs to the NXF family. As to quaternary structure, in the ovaries, part of a complex composed of at least Panx, nxf2, piwi and Nxt1. The complex is knowns as Panx-induced cotranscriptional silencing (PICTS) complex, Panx-nxf2-dependent TAP/p15 silencing (Pandas complex), SFiNX (silencing factor interacting nuclear export variant) or piwi-Panx-nxf2-p15 (PPNP) complex. Interacts (via TAP-C domain) with Panx (via NIR region); the interaction is direct. Interacts (via NTF2 domain) with Nxt1; the interaction is direct and prevents Nxt1 binding to nucleoporins. Interacts with sbr/Nxf1. In terms of tissue distribution, expressed in female gonads (at protein level). Expressed ubiquitously.

It is found in the cytoplasm. It localises to the nucleus. Its subcellular location is the nucleoplasm. Its function is as follows. May be involved in the export of mRNA from the nucleus to the cytoplasm. In the ovaries, forms a complex with nxf2, piwi and Nxt1 which acts as effectors of cotranscriptional transposon silencing. On recruitment to a target transcript, interacts with single stranded RNA, thereby anchoring the complex via the nascent target transcript to chromatin and allowing Panx to recruit silencing effectors to establishing repressive heterochromatin at transposon loci. Does not affect piRNA biogenesis. The interaction with Panx stabilizes the nuclear protein complex. Does not bind nucleoporins, but regulates sbr/Nxf1 binding to nucleoporins and, indirectly, transposon exports. The protein is Nuclear RNA export factor 2 (nxf2) of Drosophila melanogaster (Fruit fly).